The following is a 101-amino-acid chain: Chaperone modulatory protein CbpM (101 aa).

It belongs to the CbpM family.

Functionally, interacts with CbpA and inhibits both the DnaJ-like co-chaperone activity and the DNA binding activity of CbpA. Together with CbpA, modulates the activity of the DnaK chaperone system. Does not inhibit the co-chaperone activity of DnaJ. This Pseudomonas putida (strain W619) protein is Chaperone modulatory protein CbpM.